Here is a 278-residue protein sequence, read N- to C-terminus: Biotin synthase (278 aa).

The Radical SAM core domain maps to 1–227; it reads MQIMLCAISN…QSVVMVAGGR (227 aa). Residues cysteine 16, cysteine 20, and cysteine 23 each contribute to the [4Fe-4S] cluster site. [2Fe-2S] cluster contacts are provided by cysteine 60, asparagine 96, and cysteine 154.

Belongs to the radical SAM superfamily. Biotin synthase family. As to quaternary structure, homodimer. [4Fe-4S] cluster is required as a cofactor. The cofactor is [2Fe-2S] cluster.

The catalysed reaction is (4R,5S)-dethiobiotin + (sulfur carrier)-SH + 2 reduced [2Fe-2S]-[ferredoxin] + 2 S-adenosyl-L-methionine = (sulfur carrier)-H + biotin + 2 5'-deoxyadenosine + 2 L-methionine + 2 oxidized [2Fe-2S]-[ferredoxin]. It functions in the pathway cofactor biosynthesis; biotin biosynthesis; biotin from 7,8-diaminononanoate: step 2/2. Catalyzes the conversion of dethiobiotin (DTB) to biotin by the insertion of a sulfur atom into dethiobiotin via a radical-based mechanism. This Campylobacter jejuni subsp. jejuni serotype O:2 (strain ATCC 700819 / NCTC 11168) protein is Biotin synthase.